The chain runs to 257 residues: NAD-capped RNA hydrolase NudC (257 aa).

2 residues coordinate substrate: lysine 25 and arginine 69. 2 residues coordinate Zn(2+): cysteine 98 and cysteine 101. Residue glutamate 111 participates in substrate binding. Residues cysteine 116 and cysteine 119 each coordinate Zn(2+). A substrate-binding site is contributed by tyrosine 124. Residues proline 125–threonine 248 enclose the Nudix hydrolase domain. Residues alanine 158, glutamate 174, and glutamate 178 each coordinate a divalent metal cation. The Nudix box motif lies at glycine 159–glycine 180. A substrate-binding site is contributed by glutamine 192–serine 199. Glutamate 219 contacts a divalent metal cation. A substrate-binding site is contributed by alanine 241.

This sequence belongs to the Nudix hydrolase family. NudC subfamily. As to quaternary structure, homodimer. The cofactor is Mg(2+). Mn(2+) serves as cofactor. Zn(2+) is required as a cofactor.

The catalysed reaction is a 5'-end NAD(+)-phospho-ribonucleoside in mRNA + H2O = a 5'-end phospho-adenosine-phospho-ribonucleoside in mRNA + beta-nicotinamide D-ribonucleotide + 2 H(+). The enzyme catalyses NAD(+) + H2O = beta-nicotinamide D-ribonucleotide + AMP + 2 H(+). It catalyses the reaction NADH + H2O = reduced beta-nicotinamide D-ribonucleotide + AMP + 2 H(+). Its function is as follows. mRNA decapping enzyme that specifically removes the nicotinamide adenine dinucleotide (NAD) cap from a subset of mRNAs by hydrolyzing the diphosphate linkage to produce nicotinamide mononucleotide (NMN) and 5' monophosphate mRNA. The NAD-cap is present at the 5'-end of some mRNAs and stabilizes RNA against 5'-processing. Has preference for mRNAs with a 5'-end purine. Catalyzes the hydrolysis of a broad range of dinucleotide pyrophosphates. The protein is NAD-capped RNA hydrolase NudC of Escherichia coli O45:K1 (strain S88 / ExPEC).